Consider the following 560-residue polypeptide: MKVWMAILIGILCWQSSVWAVCPAWSPARAQEEISRLQQQIKQWDDDYWKEGKSEVEDGVYDQLSARLTQWQRCFGSEPRDVMMPPLNGAVMHPVAHTGVRKMVDKNALSLWMRERSDLWVQPKVDGVAVTLVYRDGKLNKAISRGNGLKGEDWTQKVSLISAVPQTVSGPLANSTLQGEIFLQREGHIQQQMGGINARAKVAGLMMRQDDSDTLNSLGVFVWAWPDGPQLMSDRLKELATAGFTLTQTYTRAVKNADEVARVRNEWWKAELPFVTDGVVVRAAKEPESRHWLPGQAEWLVAWKYQPVAQVAEVKAIQFAVGKSGKISVVASLAPVMLDDKKVQRVNIGSVRRWQEWDIAPGDQILVSLAGQGIPRIDDVVWRGAERTKPTPPENRFNSLTCYFASDVCQEQFISRLVWLGAKQVLGLDGIGEAGWRALHQTHRFEHIFSWLLLTPEQLQNTPGIAKSKSAQLWHQFNLARKQPFTRWVMAMGIPLTRAALNASDERSWSQLLFSTEQFWQQLPGTGSGRARQVIEWKENAQIKKLGSWLAAQQITGFEP.

Residue lysine 124 is the N6-AMP-lysine intermediate of the active site.

Belongs to the NAD-dependent DNA ligase family. LigB subfamily.

The enzyme catalyses NAD(+) + (deoxyribonucleotide)n-3'-hydroxyl + 5'-phospho-(deoxyribonucleotide)m = (deoxyribonucleotide)n+m + AMP + beta-nicotinamide D-nucleotide.. Catalyzes the formation of phosphodiester linkages between 5'-phosphoryl and 3'-hydroxyl groups in double-stranded DNA using NAD as a coenzyme and as the energy source for the reaction. The chain is DNA ligase B from Escherichia coli (strain K12 / DH10B).